A 79-amino-acid polypeptide reads, in one-letter code: Cell division protein ZapB (79 aa).

A coiled-coil region spans residues 4–78 (EVFEKLEAKV…LRALLGKMEE (75 aa)).

It belongs to the ZapB family. Homodimer. The ends of the coiled-coil dimer bind to each other, forming polymers. Interacts with FtsZ.

It localises to the cytoplasm. Its function is as follows. Non-essential, abundant cell division factor that is required for proper Z-ring formation. It is recruited early to the divisome by direct interaction with FtsZ, stimulating Z-ring assembly and thereby promoting cell division earlier in the cell cycle. Its recruitment to the Z-ring requires functional FtsA or ZipA. The chain is Cell division protein ZapB from Pectobacterium atrosepticum (strain SCRI 1043 / ATCC BAA-672) (Erwinia carotovora subsp. atroseptica).